The following is a 1142-amino-acid chain: Auxin response factor 5 (1142 aa).

A DNA-binding region (TF-B3) is located at residues phenylalanine 148–asparagine 250. Positions arginine 1009 to glutamate 1093 constitute a PB1 domain. The segment at serine 1114–glutamate 1142 is disordered.

Belongs to the ARF family. As to quaternary structure, homodimers and heterodimers. Expressed in roots, culms, leaves and young panicles.

The protein localises to the nucleus. Its function is as follows. Auxin response factors (ARFs) are transcriptional factors that bind specifically to the DNA sequence 5'-TGTCTC-3' found in the auxin-responsive promoter elements (AuxREs). The protein is Auxin response factor 5 (ARF5) of Oryza sativa subsp. japonica (Rice).